The chain runs to 99 residues: Large ribosomal subunit protein uL23 (99 aa).

This sequence belongs to the universal ribosomal protein uL23 family. In terms of assembly, part of the 50S ribosomal subunit. Contacts protein L29, and trigger factor when it is bound to the ribosome.

Functionally, one of the early assembly proteins it binds 23S rRNA. One of the proteins that surrounds the polypeptide exit tunnel on the outside of the ribosome. Forms the main docking site for trigger factor binding to the ribosome. The sequence is that of Large ribosomal subunit protein uL23 from Shewanella loihica (strain ATCC BAA-1088 / PV-4).